Consider the following 101-residue polypeptide: Glutenin, high molecular weight subunit PC256 (101 aa).

Over residues 1 to 27 the composition is skewed to polar residues; sequence EKLGQGQQPRQWLQPRQGQQGYYPTSP. The tract at residues 1–65 is disordered; the sequence is EKLGQGQQPR…QGYDSPYHVS (65 aa). Residues 41–62 are compositionally biased toward low complexity; sequence QGYYPTSPQQSGQGQQGYDSPY.

It belongs to the gliadin/glutenin family. In terms of assembly, disulfide-bridge linked aggregates.

Its function is as follows. Glutenins are high-molecular weight seed storage proteins of wheat endosperm. Thought to be responsible for the visco-elastic property of wheat dough. The protein is Glutenin, high molecular weight subunit PC256 of Triticum aestivum (Wheat).